The sequence spans 159 residues: Ribosomal RNA large subunit methyltransferase H (159 aa).

Residues leucine 76, glycine 108, and 127–132 (FSKMTL) each bind S-adenosyl-L-methionine.

It belongs to the RNA methyltransferase RlmH family. As to quaternary structure, homodimer.

It is found in the cytoplasm. It catalyses the reaction pseudouridine(1915) in 23S rRNA + S-adenosyl-L-methionine = N(3)-methylpseudouridine(1915) in 23S rRNA + S-adenosyl-L-homocysteine + H(+). Its function is as follows. Specifically methylates the pseudouridine at position 1915 (m3Psi1915) in 23S rRNA. This is Ribosomal RNA large subunit methyltransferase H from Bacillus mycoides (strain KBAB4) (Bacillus weihenstephanensis).